We begin with the raw amino-acid sequence, 220 residues long: Fructose-6-phosphate aldolase 2 (220 aa).

The active-site Schiff-base intermediate with substrate is the K85.

The protein belongs to the transaldolase family. Type 3A subfamily. As to quaternary structure, homodecamer.

It localises to the cytoplasm. It carries out the reaction beta-D-fructose 6-phosphate = dihydroxyacetone + D-glyceraldehyde 3-phosphate. In terms of biological role, catalyzes the reversible formation of fructose 6-phosphate from dihydroxyacetone and D-glyceraldehyde 3-phosphate via an aldolization reaction. Can utilize hydroxyacetone as an alternative donor substrate. Is also able to catalyze the direct self-aldol addition of glycolaldehyde. Is less catalytically efficient than the isozyme FsaA. Does not display transaldolase activity. In Escherichia coli (strain K12), this protein is Fructose-6-phosphate aldolase 2 (fsaB).